A 764-amino-acid chain; its full sequence is Nucleolar transcription factor 1 (764 aa).

M1 bears the N-acetylmethionine mark. A disordered region spans residues 1 to 21; sequence MNGEADCPTDLEMAAPKGQDR. 2 DNA-binding regions (HMG box) span residues 112–180 and 196–264; these read PKKP…ARFR and PEKP…RDYI. A Phosphothreonine modification is found at T201. Phosphoserine is present on residues S273, S336, S364, S389, S412, S433, S435, S484, S495, S546, S584, and S638. Residues 298–362 constitute a DNA-binding region (HMG box 3); the sequence is TKPPPNSYSL…DYEVELLRFL (65 aa). A disordered region spans residues 381–411; sequence NINKKQATSPASKKPAQEGGKGGSEKPKRPV. DNA-binding regions (HMG box) lie at residues 407–475, 482–549, and 568–634; these read PKRP…GGER, PESP…SEMR, and KKPP…DLWV. Residues 459–487 are disordered; the sequence is REAALKAQSERKPGGEREERGKLPESPKR. The interval 546–576 is disordered; the sequence is SEMRAPPAATNSSKKMKFQGEPKKPPMNGYQ. The disordered stretch occupies residues 648 to 764; sequence YISNKRKSMT…SGDSSDSDSN (117 aa). Over residues 664 to 674 the composition is skewed to polar residues; the sequence is PKSSRTTLQSK. Acidic residues predominate over residues 677-745; that stretch reads SEEDDEEDED…DDDEDEDNES (69 aa). The span at 746–758 shows a compositional bias: low complexity; sequence EGSSSSSSSSGDS.

Homodimer. Part of Pol I pre-initiation complex (PIC), in which Pol I core assembles with RRN3 and promoter-bound UTBF and SL1/TIF-IB complex. Interacts with TOP2A in the context of Pol I complex. Interacts with TBP. Interacts with TAF1A. Interacts with RASL11A. Binds to IRS1 and PIK3CA. Interacts with DHX33. Interacts with PHF6. Interacts with CEBPA (isoform 1 and isoform 4). Interacts with DDX11. Interacts with NOP53. Interacts with ALKBH2. Phosphorylated and activated by PIK3CA.

It localises to the nucleus. The protein localises to the nucleolus. Its function is as follows. Recognizes the ribosomal RNA gene promoter and activates transcription mediated by RNA polymerase I (Pol I) through cooperative interactions with the transcription factor SL1/TIF-IB complex. It binds specifically to the upstream control element and can activate Pol I promoter escape. The polypeptide is Nucleolar transcription factor 1 (UBTF) (Homo sapiens (Human)).